Here is a 173-residue protein sequence, read N- to C-terminus: Large ribosomal subunit protein uL10 (173 aa).

It belongs to the universal ribosomal protein uL10 family. In terms of assembly, part of the ribosomal stalk of the 50S ribosomal subunit. The N-terminus interacts with L11 and the large rRNA to form the base of the stalk. The C-terminus forms an elongated spine to which L12 dimers bind in a sequential fashion forming a multimeric L10(L12)X complex.

In terms of biological role, forms part of the ribosomal stalk, playing a central role in the interaction of the ribosome with GTP-bound translation factors. This Maridesulfovibrio salexigens (strain ATCC 14822 / DSM 2638 / NCIMB 8403 / VKM B-1763) (Desulfovibrio salexigens) protein is Large ribosomal subunit protein uL10.